A 225-amino-acid polypeptide reads, in one-letter code: Biosynthetic peptidoglycan transglycosylase (225 aa).

The chain crosses the membrane as a helical span at residues 8-28; the sequence is VLLIFIGAILFIQLWIFSSLV.

The protein belongs to the glycosyltransferase 51 family.

It localises to the cell inner membrane. The enzyme catalyses [GlcNAc-(1-&gt;4)-Mur2Ac(oyl-L-Ala-gamma-D-Glu-L-Lys-D-Ala-D-Ala)](n)-di-trans,octa-cis-undecaprenyl diphosphate + beta-D-GlcNAc-(1-&gt;4)-Mur2Ac(oyl-L-Ala-gamma-D-Glu-L-Lys-D-Ala-D-Ala)-di-trans,octa-cis-undecaprenyl diphosphate = [GlcNAc-(1-&gt;4)-Mur2Ac(oyl-L-Ala-gamma-D-Glu-L-Lys-D-Ala-D-Ala)](n+1)-di-trans,octa-cis-undecaprenyl diphosphate + di-trans,octa-cis-undecaprenyl diphosphate + H(+). The protein operates within cell wall biogenesis; peptidoglycan biosynthesis. Functionally, peptidoglycan polymerase that catalyzes glycan chain elongation from lipid-linked precursors. In Acinetobacter baumannii (strain ATCC 17978 / DSM 105126 / CIP 53.77 / LMG 1025 / NCDC KC755 / 5377), this protein is Biosynthetic peptidoglycan transglycosylase.